A 236-amino-acid polypeptide reads, in one-letter code: Small ribosomal subunit protein uS3 (236 aa).

A KH type-2 domain is found at 39-107 (IREILHKELK…DVVINIVEIR (69 aa)). A disordered region spans residues 213-236 (MAQDKRMNEGGGESPSPRSRRDAA).

This sequence belongs to the universal ribosomal protein uS3 family. As to quaternary structure, part of the 30S ribosomal subunit. Forms a tight complex with proteins S10 and S14.

Functionally, binds the lower part of the 30S subunit head. Binds mRNA in the 70S ribosome, positioning it for translation. This is Small ribosomal subunit protein uS3 from Bradyrhizobium sp. (strain ORS 278).